The primary structure comprises 486 residues: Galactose-1-phosphate uridylyltransferase (486 aa).

Belongs to the galactose-1-phosphate uridylyltransferase type 2 family.

Its subcellular location is the cytoplasm. It catalyses the reaction alpha-D-galactose 1-phosphate + UDP-alpha-D-glucose = alpha-D-glucose 1-phosphate + UDP-alpha-D-galactose. The protein operates within carbohydrate metabolism; galactose metabolism. The chain is Galactose-1-phosphate uridylyltransferase from Lacticaseibacillus paracasei (strain ATCC 334 / BCRC 17002 / CCUG 31169 / CIP 107868 / KCTC 3260 / NRRL B-441) (Lactobacillus paracasei).